A 199-amino-acid polypeptide reads, in one-letter code: Superoxide dismutase [Fe] (199 aa).

Positions 28, 80, 162, and 166 each coordinate Fe cation.

The protein belongs to the iron/manganese superoxide dismutase family. In terms of assembly, homodimer. Requires Fe cation as cofactor.

The protein localises to the cytoplasm. It catalyses the reaction 2 superoxide + 2 H(+) = H2O2 + O2. In terms of biological role, destroys superoxide anion radicals which are normally produced within the cells and which are toxic to biological systems. This chain is Superoxide dismutase [Fe] (sodB), found in Leptolyngbya boryana (Plectonema boryanum).